The following is a 610-amino-acid chain: Transcription termination factor Rho (610 aa).

The disordered stretch occupies residues 117–227; the sequence is EVSRRERRGA…GDGAEAELRQ (111 aa). The segment covering 118–131 has biased composition (basic and acidic residues); it reads VSRRERRGASREAD. Over residues 178 to 187 the composition is skewed to polar residues; sequence GVEQQSSSLQ. Residues 189-198 are compositionally biased toward basic and acidic residues; that stretch reads RGDDDGEGRQ. Positions 199-214 are enriched in basic residues; the sequence is GRRGRRFRDRDRRRRG. Positions 215-227 are enriched in basic and acidic residues; the sequence is ERSGDGAEAELRQ. The Rho RNA-BD domain maps to 231–309; sequence VQPVAGILDV…VRLDSINGGS (79 aa). ATP is bound by residues 352–357, 364–369, and Arg395; these read GKGQRA and KAGKTT.

It belongs to the Rho family. In terms of assembly, homohexamer. The homohexamer assembles into an open ring structure.

Functionally, facilitates transcription termination by a mechanism that involves Rho binding to the nascent RNA, activation of Rho's RNA-dependent ATPase activity, and release of the mRNA from the DNA template. This chain is Transcription termination factor Rho, found in Mycobacterium leprae (strain TN).